Reading from the N-terminus, the 117-residue chain is Conotoxin vil14.3 (117 aa).

The first 22 residues, 1–22, serve as a signal peptide directing secretion; the sequence is MGFRVLVLVVMATTSALPFTFS. Residues 23-90 constitute a propeptide that is removed on maturation; the sequence is EEPGRSPFRP…FAELSVGQRR (68 aa). The disordered stretch occupies residues 53–79; sequence RADGQPPDMRQPEMRRPEMRRPEVRQP. Over residues 62–79 the composition is skewed to basic and acidic residues; sequence RQPEMRRPEMRRPEVRQP. Cystine bridges form between Cys96-Cys116 and Cys100-Cys112.

The protein belongs to the conotoxin R superfamily. Expressed by the venom duct.

The protein localises to the secreted. The polypeptide is Conotoxin vil14.3 (Conus villepinii (Villepin's cone)).